The chain runs to 112 residues: uncharacterized protein (112 aa).

This is an uncharacterized protein from Saccharomyces cerevisiae (strain ATCC 204508 / S288c) (Baker's yeast).